A 212-amino-acid polypeptide reads, in one-letter code: Peptide methionine sulfoxide reductase MsrA (212 aa).

C51 is a catalytic residue.

The protein belongs to the MsrA Met sulfoxide reductase family.

It catalyses the reaction L-methionyl-[protein] + [thioredoxin]-disulfide + H2O = L-methionyl-(S)-S-oxide-[protein] + [thioredoxin]-dithiol. The catalysed reaction is [thioredoxin]-disulfide + L-methionine + H2O = L-methionine (S)-S-oxide + [thioredoxin]-dithiol. In terms of biological role, has an important function as a repair enzyme for proteins that have been inactivated by oxidation. Catalyzes the reversible oxidation-reduction of methionine sulfoxide in proteins to methionine. This Vibrio parahaemolyticus serotype O3:K6 (strain RIMD 2210633) protein is Peptide methionine sulfoxide reductase MsrA.